Consider the following 754-residue polypeptide: RNA-directed RNA polymerase catalytic subunit (754 aa).

Short sequence motifs (nuclear localization signal) lie at residues 189–197 (VVRREKDKR) and 205–218 (KVPVMGIDSIKHDE). A promoter-binding site region spans residues 251 to 258 (RPFSKIVE). The 197-residue stretch at 288–484 (VTSLNARMNS…GINMSLEKSY (197 aa)) folds into the RdRp catalytic domain.

The protein belongs to the influenza viruses polymerase PB1 family. As to quaternary structure, influenza RNA polymerase is composed of three subunits: PB1, PB2 and PA. Interacts (via N-terminus) with PA (via C-terminus). Interacts (via C-terminus) with PB2 (via N-terminus); this interaction is essential for transcription initiation. Post-translationally, phosphorylated by host PRKCA.

It localises to the host nucleus. The protein localises to the host cytoplasm. The catalysed reaction is RNA(n) + a ribonucleoside 5'-triphosphate = RNA(n+1) + diphosphate. Functionally, RNA-dependent RNA polymerase which is responsible for replication and transcription of virus RNA segments. The transcription of viral mRNAs occurs by a unique mechanism called cap-snatching. 5' methylated caps of cellular mRNAs are cleaved after 10-13 nucleotides by PA. In turn, these short capped RNAs are used as primers by PB1 for transcription of viral mRNAs. During virus replication, PB1 initiates RNA synthesis and copy vRNA into complementary RNA (cRNA) which in turn serves as a template for the production of more vRNAs. This chain is RNA-directed RNA polymerase catalytic subunit, found in Influenza C virus (strain C/Johannesburg/1/1966).